A 111-amino-acid polypeptide reads, in one-letter code: Type III endosome membrane protein TEMP (111 aa).

Over 1 to 27 the chain is Extracellular; the sequence is MIGGNTTIISGAINASTEAPGLGTGGR. Asn-5 carries an N-linked (GlcNAc...) asparagine glycan. A helical; Signal-anchor for type III membrane protein membrane pass occupies residues 28-48; the sequence is AWPVLVGVVLGAVVLSILIAL. Residues 49-111 are Cytoplasmic-facing; it reads AAKCHLCRRY…TTGSRDHFSL (63 aa). The segment at 64–111 is disordered; it reads HRPLSSAGGGNRPPVGEDEDDDGFIEDNYIQPGAGEMETTGSRDHFSL. Residues 79-88 show a composition bias toward acidic residues; sequence GEDEDDDGFI.

As to expression, expressed in stomach, kidney, large and small intestine and kidney.

It is found in the membrane. Its subcellular location is the early endosome. The protein localises to the recycling endosome. It localises to the cell membrane. Its function is as follows. May be involved in membrane trafficking between endosomes and plasma membrane. The chain is Type III endosome membrane protein TEMP from Mus musculus (Mouse).